We begin with the raw amino-acid sequence, 347 residues long: MAQSRDGGNPFAEPSELDNPFQDPAVIQHRPSRQYATLDVYNPFETREPPPAYEPPAPAPLPPPSAPSLQPSRKLSPTEPKNYGSYSTQASAAAATAELLKKQEELNRKAEELDRRERELQHAALGGTATRQNNWPPLPSFCPVQPCFFQDISMEIPQEFQKTVSTMYYLWMCSTLALLLNFLACLASFCVETNNGAGFGLSILWVLLFTPCSFVCWYRPMYKAFRSDSSFNFFVFFFIFFVQDVLFVLQAIGIPGWGFSGWISALVVPKGNTAVSVLMLLVALLFTGIAVLGIVMLKRIHSLYRRTGASFQKAQQEFAAGVFSNPAVRTAAANAAAGAAENAFRAP.

The tract at residues 1-88 is disordered; sequence MAQSRDGGNP…EPKNYGSYST (88 aa). At 1 to 170 the chain is on the cytoplasmic side; that stretch reads MAQSRDGGNP…QKTVSTMYYL (170 aa). A Phosphoserine modification is found at S32. T37 carries the post-translational modification Phosphothreonine. Residues Y41 and Y53 each carry the phosphotyrosine modification. Positions 49–66 are enriched in pro residues; it reads PPPAYEPPAPAPLPPPSA. Phosphoserine is present on residues S72 and S76. Y83 is modified (phosphotyrosine). Position 85 is a phosphoserine (S85). A run of 4 helical transmembrane segments spans residues 171-191, 197-217, 247-267, and 277-297; these read WMCSTLALLLNFLACLASFCV, AGFGLSILWVLLFTPCSFVCW, FVLQAIGIPGWGFSGWISALV, and VLMLLVALLFTGIAVLGIVML. Residues 298–347 lie on the Cytoplasmic side of the membrane; the sequence is KRIHSLYRRTGASFQKAQQEFAAGVFSNPAVRTAAANAAAGAAENAFRAP. Residue K313 forms a Glycyl lysine isopeptide (Lys-Gly) (interchain with G-Cter in SUMO1) linkage.

Belongs to the SCAMP family. In terms of assembly, interacts with NEDD4, NEDD4L and TSG101. Interacts with RNF126. Post-translationally, monoubiquitinated. In terms of tissue distribution, widely expressed, with highest expression in heart and skeletal muscle.

It localises to the membrane. In terms of biological role, functions in post-Golgi recycling pathways. Acts as a recycling carrier to the cell surface. The protein is Secretory carrier-associated membrane protein 3 (SCAMP3) of Homo sapiens (Human).